The following is a 1031-amino-acid chain: Sister chromatid cohesion 1 protein 4 (1031 aa).

The segment at 461 to 481 is disordered; that stretch reads TPDKEDPGTCNDDAGNNNITG. Positions 545-552 match the Nuclear localization signal motif; it reads TKRLRSAP. Disordered stretches follow at residues 661–703, 742–772, and 803–835; these read VEEN…EELK, EKLD…ADPN, and ELPH…VGST. 2 stretches are compositionally biased toward basic and acidic residues: residues 742-762 and 803-825; these read EKLD…HDGE and ELPH…RDDQ.

The protein belongs to the rad21 family. Component of the cohesin complex. Expressed in tissues containing dividing cells such as seedlings, flower buds, flowers and inflorescence meristem tissue.

The protein resides in the nucleus. It localises to the chromosome. Its subcellular location is the centromere. In terms of biological role, involved in sister chromatid and centromere cohesion during mitosis. The polypeptide is Sister chromatid cohesion 1 protein 4 (SYN4) (Arabidopsis thaliana (Mouse-ear cress)).